The following is a 99-amino-acid chain: Nucleoid-associated protein str1598 (99 aa).

This sequence belongs to the YbaB/EbfC family. Homodimer.

The protein localises to the cytoplasm. It is found in the nucleoid. Its function is as follows. Binds to DNA and alters its conformation. May be involved in regulation of gene expression, nucleoid organization and DNA protection. This Streptococcus thermophilus (strain CNRZ 1066) protein is Nucleoid-associated protein str1598.